The primary structure comprises 347 residues: Single-pass membrane and coiled-coil domain-containing protein 2 (347 aa).

The segment at 1-89 is disordered; the sequence is MMSLQLGTAG…PPSKPDEQEV (89 aa). Basic and acidic residues-rich tracts occupy residues 10-21, 36-51, and 60-86; these read GKERQLAEKSRD, EMDH…DKPS, and YKMD…KPDE. A coiled-coil region spans residues 139-238; sequence DWLERINNII…MNVLNSKLEM (100 aa). Residue Ser-178 is modified to Phosphoserine. Positions 243–274 are disordered; the sequence is GSDADSHNSEDVDTEQEEPLVPEASPSLSASP. The span at 253 to 262 shows a compositional bias: acidic residues; sequence DVDTEQEEPL. The segment covering 263-273 has biased composition (low complexity); that stretch reads VPEASPSLSAS. Residues 288–308 form a helical membrane-spanning segment; that stretch reads LFVIVYVVTITGLSCYILFVD.

It localises to the membrane. This is Single-pass membrane and coiled-coil domain-containing protein 2 (Smco2) from Mus musculus (Mouse).